The following is a 78-amino-acid chain: Short neurotoxin OH-26 (78 aa).

Positions 1–21 (MKNLLLTFLVVTIVCLDLGYT) are cleaved as a signal peptide. 4 disulfide bridges follow: Cys24–Cys40, Cys33–Cys58, Cys62–Cys70, and Cys71–Cys76.

Belongs to the three-finger toxin family. Short-chain subfamily. Expressed by the venom gland.

Its subcellular location is the secreted. Its function is as follows. This three-finger toxin binds and inhibits the nicotinic acetylcholine receptor (nAChR). The chain is Short neurotoxin OH-26 from Ophiophagus hannah (King cobra).